The sequence spans 176 residues: Large ribosomal subunit protein uL6 (176 aa).

The protein belongs to the universal ribosomal protein uL6 family. Part of the 50S ribosomal subunit.

In terms of biological role, this protein binds to the 23S rRNA, and is important in its secondary structure. It is located near the subunit interface in the base of the L7/L12 stalk, and near the tRNA binding site of the peptidyltransferase center. The protein is Large ribosomal subunit protein uL6 of Thiobacillus denitrificans (strain ATCC 25259 / T1).